The sequence spans 326 residues: uncharacterized protein (326 aa).

Solcar repeat units follow at residues 20-107, 120-219, and 231-322; these read QDSN…CKKK, LTNT…LREF, and KSNL…VCDS. The next 6 helical transmembrane spans lie at 24–40, 84–104, 126–143, 195–213, 237–254, and 297–316; these read IAFL…RTVV, GLNC…YEAC, LFSG…TYPL, VWPT…FAVY, LTIG…TYPF, and GLAA…WLVY.

It belongs to the mitochondrial carrier (TC 2.A.29) family.

It localises to the mitochondrion inner membrane. This is an uncharacterized protein from Saccharomyces cerevisiae (strain ATCC 204508 / S288c) (Baker's yeast).